A 74-amino-acid chain; its full sequence is EMBRYO SURROUNDING FACTOR 1-like protein 4 (74 aa).

The N-terminal stretch at 1 to 22 (MKSSHAYLVCILLLSLFSLHQC) is a signal peptide. Disulfide bonds link Cys-36/Cys-51, Cys-41/Cys-70, Cys-49/Cys-66, and Cys-52/Cys-59.

Belongs to the MEG family. As to expression, expressed in flowers.

This Arabidopsis thaliana (Mouse-ear cress) protein is EMBRYO SURROUNDING FACTOR 1-like protein 4 (ESFL4).